The sequence spans 156 residues: MKCRLIATGECAPSWVAQGFAEYQKRLSHWMPLELVEIEPGLRGKGRDAQRATDDEGRRVLAALPKNAYVVALDVPGRPLSSEQLAQRMEHWRGQGRDLAFLIGGPEGHAAEVLKSASESWSIGPLTLPHMLVRLIVAEQLYRAAAMLANHPYHRA.

Residues Leu73, Gly104, and Ile123–Leu128 each bind S-adenosyl-L-methionine.

Belongs to the RNA methyltransferase RlmH family. Homodimer.

The protein resides in the cytoplasm. It carries out the reaction pseudouridine(1915) in 23S rRNA + S-adenosyl-L-methionine = N(3)-methylpseudouridine(1915) in 23S rRNA + S-adenosyl-L-homocysteine + H(+). In terms of biological role, specifically methylates the pseudouridine at position 1915 (m3Psi1915) in 23S rRNA. The polypeptide is Ribosomal RNA large subunit methyltransferase H (Xanthomonas euvesicatoria pv. vesicatoria (strain 85-10) (Xanthomonas campestris pv. vesicatoria)).